A 232-amino-acid chain; its full sequence is MDIRVDRKAFAGHTVLHDINLSLQTGEIVSLLGPSGCGKSTLLRIVAGLEQDFRGSVERIQGQVAFVFQEPRLMPWLTVEQNIGFSDDNGYDRKWVSQLIEEVGLSGFANALPKALSGGMAQRVAIARGLYSHPTILLLDEPFSAVDAFTRMKLQDLLLQLAERHAITLLLVTHDVDEALYLSDRVLVMGSRPGTITHELPVGLQTPRDRRDPLLARLKAEALTELHQAQVI.

An ABC transporter domain is found at 1–216 (MDIRVDRKAF…PRDRRDPLLA (216 aa)). Position 33–40 (33–40 (GPSGCGKS)) interacts with ATP.

The protein belongs to the ABC transporter superfamily. Aliphatic sulfonates importer (TC 3.A.1.17.2) family. The complex is composed of two ATP-binding proteins (SsuB), two transmembrane proteins (SsuC) and a solute-binding protein (SsuA).

The protein resides in the cell inner membrane. The catalysed reaction is ATP + H2O + aliphatic sulfonate-[sulfonate-binding protein]Side 1 = ADP + phosphate + aliphatic sulfonateSide 2 + [sulfonate-binding protein]Side 1.. Its function is as follows. Part of the ABC transporter complex SsuABC involved in aliphatic sulfonates import. Responsible for energy coupling to the transport system. This is Aliphatic sulfonates import ATP-binding protein SsuB 2 from Pseudomonas syringae pv. tomato (strain ATCC BAA-871 / DC3000).